The primary structure comprises 336 residues: Dihydroorotate dehydrogenase (quinone) (336 aa).

Residues 62–66 (AGLDK) and T86 contribute to the FMN site. K66 contributes to the substrate binding site. Position 111–115 (111–115 (NRMGF)) interacts with substrate. Residues N139 and N172 each contribute to the FMN site. N172 is a substrate binding site. S175 functions as the Nucleophile in the catalytic mechanism. N177 contacts substrate. 2 residues coordinate FMN: K217 and T245. Residue 246–247 (NT) coordinates substrate. FMN contacts are provided by residues G268, G297, and 318–319 (YS).

It belongs to the dihydroorotate dehydrogenase family. Type 2 subfamily. Monomer. It depends on FMN as a cofactor.

Its subcellular location is the cell membrane. The catalysed reaction is (S)-dihydroorotate + a quinone = orotate + a quinol. The protein operates within pyrimidine metabolism; UMP biosynthesis via de novo pathway; orotate from (S)-dihydroorotate (quinone route): step 1/1. In terms of biological role, catalyzes the conversion of dihydroorotate to orotate with quinone as electron acceptor. This chain is Dihydroorotate dehydrogenase (quinone), found in Aeromonas hydrophila subsp. hydrophila (strain ATCC 7966 / DSM 30187 / BCRC 13018 / CCUG 14551 / JCM 1027 / KCTC 2358 / NCIMB 9240 / NCTC 8049).